A 78-amino-acid chain; its full sequence is Ferredoxin 7Fe (78 aa).

2 4Fe-4S ferredoxin-type domains span residues 2 to 29 (AYVI…IHEG) and 31 to 60 (DQYY…HEDF). The [3Fe-4S] cluster site is built by cysteine 9 and cysteine 17. Positions 21, 40, 43, and 46 each coordinate [4Fe-4S] cluster. Cysteine 50 lines the [3Fe-4S] cluster pocket.

As to quaternary structure, monomer. The cofactor is [4Fe-4S] cluster. [3Fe-4S] cluster serves as cofactor.

This Hydrogenibacillus schlegelii (Bacillus schlegelii) protein is Ferredoxin 7Fe (fdxA).